The primary structure comprises 71 residues: Conotoxin LvVIIB (71 aa).

The first 17 residues, 1–17 (VLIIAVLFLAASELVTA), serve as a signal peptide directing secretion. Residues 18–42 (DYTRDEWQYRAASLRDAMRNFRDTR) constitute a propeptide that is removed on maturation. 3 cysteine pairs are disulfide-bonded: cysteine 43/cysteine 57, cysteine 50/cysteine 62, and cysteine 56/cysteine 69.

The protein belongs to the conotoxin O1 superfamily. As to expression, expressed by the venom duct.

The protein resides in the secreted. In Conus lividus (Livid cone), this protein is Conotoxin LvVIIB.